Here is a 162-residue protein sequence, read N- to C-terminus: CASP-like protein 1C1 (162 aa).

The Cytoplasmic segment spans residues 1–7; that stretch reads MFSAKAR. A helical transmembrane segment spans residues 8 to 28; the sequence is WIVAVVLRVAAAGAAAVAAVL. At 29–52 the chain is on the extracellular side; that stretch reads MAMSHDEVIVYGMEVQAKFRYTPS. A helical membrane pass occupies residues 53-73; the sequence is LVFFVAANAAVSACSLVVLLV. Residues 74 to 83 are Cytoplasmic-facing; that stretch reads PSSTSKLAAR. Residues 84–104 form a helical membrane-spanning segment; sequence LLLMADVVLGMVLAGAFAAAG. Over 105–135 the chain is Extracellular; that stretch reads AMAELGKNGNSHAGWIAICVQVPLFCDRVRS. The chain crosses the membrane as a helical span at residues 136–156; the sequence is ALVAGSATIVLYYLMLMYSIY. Over 157–162 the chain is Cytoplasmic; it reads TLPMFP.

It belongs to the Casparian strip membrane proteins (CASP) family. In terms of assembly, homodimer and heterodimers.

It is found in the cell membrane. This Oryza sativa subsp. japonica (Rice) protein is CASP-like protein 1C1.